The chain runs to 148 residues: RQAARVCSTRFQPENWNIDPIQRRNNCYNYATNIQTNTFAQPGRASGRRYRENVGGEVYSACLRDGLTGLRAPDAGTECLIALVVWPGEDYHFYRLDNNGYWSHKSGRTEARNTDDSGDPIIDPRTADRGPYSDFVGWLGVGPRARVN.

Residues 105–128 (KSGRTEARNTDDSGDPIIDPRTAD) form a disordered region.

As to expression, component of the acid-insoluble organic matrix of the calcified shell.

Its subcellular location is the secreted. This is Insoluble matrix shell protein 1 from Ruditapes philippinarum (Japanese carpet shell).